The sequence spans 226 residues: Peroxynitrite isomerase 2 (226 aa).

The GXWXGXG signature appears at 73–79 (GVWRGEG). Residues Lys189 and His216 each contribute to the heme b site.

Belongs to the nitrobindin family. As to quaternary structure, homodimer. Heme b is required as a cofactor.

The enzyme catalyses peroxynitrite = nitrate. It participates in nitrogen metabolism. Heme-binding protein able to scavenge peroxynitrite and to protect free L-tyrosine against peroxynitrite-mediated nitration, by acting as a peroxynitrite isomerase that converts peroxynitrite to nitrate. Therefore, this protein likely plays a role in peroxynitrite sensing and in the detoxification of reactive nitrogen and oxygen species (RNS and ROS, respectively). Is able to bind nitric oxide (NO) in vitro, but may act as a sensor of peroxynitrite levels in vivo. This Mycobacterium bovis (strain ATCC BAA-935 / AF2122/97) protein is Peroxynitrite isomerase 2.